Here is a 139-residue protein sequence, read N- to C-terminus: Small ribosomal subunit protein bS16 (139 aa).

Residues 84-139 are disordered; sequence KGEPAPAPLLQPAEKAARPSFEAIGGEDEGKGEAITQKKKADKKDEAAAESSASEA.

Belongs to the bacterial ribosomal protein bS16 family.

The sequence is that of Small ribosomal subunit protein bS16 from Streptomyces coelicolor (strain ATCC BAA-471 / A3(2) / M145).